A 108-amino-acid polypeptide reads, in one-letter code: Integration host factor subunit alpha (108 aa).

It belongs to the bacterial histone-like protein family. As to quaternary structure, heterodimer of an alpha and a beta chain.

This protein is one of the two subunits of integration host factor, a specific DNA-binding protein that functions in genetic recombination as well as in transcriptional and translational control. The sequence is that of Integration host factor subunit alpha from Rhodopseudomonas palustris (strain BisB18).